The chain runs to 181 residues: Transcription factor bHLH167 (181 aa).

A disordered region spans residues 1–22 (MGRAREIGEGNSSSLREQRNLR). A bHLH domain is found at 14–63 (SLREQRNLREKDRRMRMKHLFSILSSHVSPTRKLPVPHLIDQATSYMIQL).

This sequence belongs to the bHLH protein family.

Its subcellular location is the nucleus. This Arabidopsis thaliana (Mouse-ear cress) protein is Transcription factor bHLH167.